The sequence spans 90 residues: Small ribosomal subunit protein bS18 (90 aa).

Residues 1 to 14 (MARDNGNKDRDGKR) are compositionally biased toward basic and acidic residues. Residues 1-23 (MARDNGNKDRDGKRPNGGRNRKM) form a disordered region.

It belongs to the bacterial ribosomal protein bS18 family. Part of the 30S ribosomal subunit. Forms a tight heterodimer with protein bS6.

Binds as a heterodimer with protein bS6 to the central domain of the 16S rRNA, where it helps stabilize the platform of the 30S subunit. This is Small ribosomal subunit protein bS18 from Clostridium acetobutylicum (strain ATCC 824 / DSM 792 / JCM 1419 / IAM 19013 / LMG 5710 / NBRC 13948 / NRRL B-527 / VKM B-1787 / 2291 / W).